Here is a 120-residue protein sequence, read N- to C-terminus: SPbeta prophage-derived uncharacterized protein YosG (120 aa).

The chain is SPbeta prophage-derived uncharacterized protein YosG (yosG) from Bacillus subtilis (strain 168).